Here is a 607-residue protein sequence, read N- to C-terminus: uncharacterized protein (607 aa).

Disordered stretches follow at residues 28-114 (GAER…KLRR) and 142-188 (DQER…NNSS). Residues 35-50 (SSHGSINSRSASPNKA) are compositionally biased toward polar residues. 2 stretches are compositionally biased toward basic and acidic residues: residues 90 to 102 (VNGE…DHDT) and 161 to 174 (KENK…KDLS). Low complexity predominate over residues 177–188 (SSSSMKKANNSS). PHD-type zinc fingers lie at residues 263–312 (NDYC…CKHH) and 406–459 (PILC…HSDH).

This is an uncharacterized protein from Schizosaccharomyces pombe (strain 972 / ATCC 24843) (Fission yeast).